Reading from the N-terminus, the 648-residue chain is MSNSNNNSSSGNHNSTTINNPKVNVYSNIPNSTTYTYGSGGGGTLSGNNTNNNNTNNNNNNNNNSSGDNKNHSPVTSATDRLTKMDIEEKWDNKNYEKDEREKSPLFHILASNLNSFGNFKVPSTFSLTPPEPNKQQQPQQQPQQQQPQQQQPQQQQPQQQQQQQPQQQQQPQQQLQQNNQQQQQQLQQQQLQQQLQQQQQQQQQQQQQQQQKQQKQQQQQQQHLHQDGIVNTPSTTQTSTTTTTTTTTTNPHTSGLSLQHAHSSYTPSNVLHSPTHFQSSLPTRLDTNPITTPIRQQQQSQQQLQQQQLQQIPPPTVNSFFLPPPVNARERLKEFKQIRVIGTGTFGKVYLIQNTKDGCYYAMKCLNKAYVVQLKQVEHLNSEKSILSSIHHPFIVNLYQAFQDEKKLYLLFEYVAGGEVFTHLRKSMKFSNSTAKFYAAEIVLALEFLHKQNIVYRDLKPENLLIDNQGHIKITDFGFAKRVEDRTFTLCGTPEYLAPEIIQSKGHGKAVDWWALGILIFEMLAGYPPFYDDDTFAIYNKILAGRITFPLGFDVDAKDLIKRLLTADRTRRLGALKDGALDVKNHRWFSDINWERLYQRRDNGPFIPKIQHQGDSSNFEMYDEEEMVEEPPSSNYVDPYAHLFKDF.

4 stretches are compositionally biased toward low complexity: residues 1–20 (MSNS…TINN), 46–67 (SGNN…NSSG), 136–175 (QQQP…PQQQ), and 232–254 (NTPS…NPHT). Disordered stretches follow at residues 1–25 (MSNS…KVNV), 40–86 (GGGG…TKMD), 121–175 (KVPS…PQQQ), and 219–290 (QQQQ…DTNP). Residues 255–290 (SGLSLQHAHSSYTPSNVLHSPTHFQSSLPTRLDTNP) are compositionally biased toward polar residues. One can recognise a Protein kinase domain in the interval 336–590 (FKQIRVIGTG…ALDVKNHRWF (255 aa)). ATP is bound by residues 342-350 (IGTGTFGKV) and lysine 365. Residue aspartate 459 is the Proton acceptor of the active site. Threonine 490 is subject to Phosphothreonine. Residues 591–648 (SDINWERLYQRRDNGPFIPKIQHQGDSSNFEMYDEEEMVEEPPSSNYVDPYAHLFKDF) form the AGC-kinase C-terminal domain.

This sequence belongs to the protein kinase superfamily. AGC Ser/Thr protein kinase family. cAMP subfamily. As to quaternary structure, in Dictyostelium the holoenzyme is a dimer composed of a regulatory (R) and a catalytic (C) subunit. In the presence of cAMP it dissociates into the active C subunit and an R monomer.

It carries out the reaction L-seryl-[protein] + ATP = O-phospho-L-seryl-[protein] + ADP + H(+). The enzyme catalyses L-threonyl-[protein] + ATP = O-phospho-L-threonyl-[protein] + ADP + H(+). Functionally, essential for differentiation and fruit morphogenesis. The polypeptide is cAMP-dependent protein kinase catalytic subunit (pkaC) (Dictyostelium discoideum (Social amoeba)).